Here is a 596-residue protein sequence, read N- to C-terminus: Succinate dehydrogenase flavoprotein subunit (596 aa).

Residues 18–23, 41–56, and Asp225 contribute to the FAD site; these read GAGGAG and SKLF…AQGG. At His49 the chain carries Tele-8alpha-FAD histidine. The substrate site is built by His246 and Thr258. Catalysis depends on Arg290, which acts as the Proton acceptor. His357 serves as a coordination point for substrate. Glu391 is an FAD binding site. A substrate-binding site is contributed by Arg402. 407-408 contributes to the FAD binding site; it reads SL.

Belongs to the FAD-dependent oxidoreductase 2 family. FRD/SDH subfamily. In terms of assembly, part of an enzyme complex containing four subunits: a flavoprotein, an iron-sulfur, cytochrome b-556, and a hydrophobic anchor protein. The cofactor is FAD.

It is found in the cell inner membrane. It catalyses the reaction a quinone + succinate = fumarate + a quinol. It participates in carbohydrate metabolism; tricarboxylic acid cycle; fumarate from succinate (bacterial route): step 1/1. The sequence is that of Succinate dehydrogenase flavoprotein subunit (sdhA) from Rickettsia bellii (strain RML369-C).